Here is a 312-residue protein sequence, read N- to C-terminus: Urease accessory protein UreD (312 aa).

Over residues 1–15 (MLAEQFTDKNKHAEQ) the composition is skewed to basic and acidic residues. The interval 1 to 24 (MLAEQFTDKNKHAEQELSPGSSAV) is disordered.

It belongs to the UreD family. In terms of assembly, ureD, UreF and UreG form a complex that acts as a GTP-hydrolysis-dependent molecular chaperone, activating the urease apoprotein by helping to assemble the nickel containing metallocenter of UreC. The UreE protein probably delivers the nickel.

It localises to the cytoplasm. In terms of biological role, required for maturation of urease via the functional incorporation of the urease nickel metallocenter. In Hahella chejuensis (strain KCTC 2396), this protein is Urease accessory protein UreD.